Here is a 392-residue protein sequence, read N- to C-terminus: Phosphopentomutase (392 aa).

Asp14, Asp286, His291, Asp327, His328, and His339 together coordinate Mn(2+).

It belongs to the phosphopentomutase family. The cofactor is Mn(2+).

Its subcellular location is the cytoplasm. The enzyme catalyses 2-deoxy-alpha-D-ribose 1-phosphate = 2-deoxy-D-ribose 5-phosphate. It catalyses the reaction alpha-D-ribose 1-phosphate = D-ribose 5-phosphate. Its pathway is carbohydrate degradation; 2-deoxy-D-ribose 1-phosphate degradation; D-glyceraldehyde 3-phosphate and acetaldehyde from 2-deoxy-alpha-D-ribose 1-phosphate: step 1/2. In terms of biological role, isomerase that catalyzes the conversion of deoxy-ribose 1-phosphate (dRib-1-P) and ribose 1-phosphate (Rib-1-P) to deoxy-ribose 5-phosphate (dRib-5-P) and ribose 5-phosphate (Rib-5-P), respectively. This Staphylococcus aureus (strain Mu3 / ATCC 700698) protein is Phosphopentomutase.